A 1231-amino-acid polypeptide reads, in one-letter code: MIAAPEIPTDFNLLQESETHFSSDTDFEDIEGKNQKQGKGKTCKKGKKGPAEKGKGGNGGGKPPSGPNRMNGHHQQNGVENMMLFEVVKMGKSAMQSVVDDWIESYKHDRDIALLDLINFFIQCSGCKGVVTAEMFRHMQNSEIIRKMTEEFDEDSGDYPLTMAGPQWKKFKSSFCEFIGVLVRQCQYSIIYDEYMMDTVISLLTGLSDSQVRAFRHTSTLAAMKLMTALVNVALNLSINMDNTQRQYEAERNKMIGKRANERLELLLQKRKELQENQDEIENMMNAIFKGVFVHRYRDAIAEIRAICIEEIGIWMKMYSDAFLNDSYLKYVGWTMHDKQGEVRLKCLTALQGLYYNKELNSKLELFTSRFKDRIVSMTLDKEYDVAVQAIKLLTLVLQSSEEVLTAEDCENVYHLVYSAHRPVAVAAGEFLYKKLFSRRDPEEDGMMKRRGRQGPNANLVKTLVFFFLESELHEHAAYLVDSMWDCATELLKDWECMNSLLLEEPLSGEEALTDRQESALIEIMLCTIRQAAECHPPVGRGTGKRVLTAKEKKTQLDDRTKITELFAVALPQLLAKYSVDAEKVTNLLQLPQYFDLEIYTTGRLEKHLDALLRQIRNIVEKHTDTDVLEACSKTYHALCNEEFTIFNRVDISRSQLIDELADKFNRLLEDFLQEGEEPDEDDAYQVLSTLKRITAFHNAHDLSKWDLFACNYKLLKTGIENGDMPEQIVIHALQCTHYVILWQLAKITESSSTKEDLLRLKKQMRVFCQICQHYLTNVNTTVKEQAFTILCDILMIFSHQIMSGGRDMLEPLVYTPDSSLQSELLSFILDHVFIEQDDDNNSADGQQEDEASKIEALHKRRNLLAAFCKLIVYTVVEMNTAADIFKQYMKYYNDYGDIIKETMSKTRQIDKIQCAKTLILSLQQLFNEMIQENGYNFDRSSSTFSGIKELARRFALTFGLDQLKTREAIAMLHKDGIEFAFKEPNPQGESHPPLNLAFLDILSEFSSKLLRQDKRTVYVYLEKFMTFQMSLRREDVWLPLMSYRNSLLAGGDDDTMSVISGISSRGSTVRSKKSKPSTGKRKVVEGMQLSLTEESSSSDSMWLSREQTLHTPVMMQTPQLTSTIMREPKRLRPEDSFMSVYPMQTEHHQTPLDYNRRGTSLMEDDEEPIVEDVMMSSEGRIEDLNEGMDFDTMDIDLPPSKNRRERTELKPDFFDPASIMDESVLGVSMF.

Met-1 bears the N-acetylmethionine mark. Residues 1–75 (MIAAPEIPTD…GPNRMNGHHQ (75 aa)) are disordered. The span at 36–48 (KQGKGKTCKKGKK) shows a compositional bias: basic residues. The region spanning 293–378 (FVHRYRDAIA…SRFKDRIVSM (86 aa)) is the SCD domain. Lys-607 carries the post-translational modification N6-acetyllysine. A phosphoserine mark is found at Ser-1058, Ser-1061, Ser-1064, and Ser-1065. Residues 1064 to 1083 (SSRGSTVRSKKSKPSTGKRK) are disordered. The span at 1071–1082 (RSKKSKPSTGKR) shows a compositional bias: basic residues. Thr-1112 is subject to Phosphothreonine. Phosphoserine is present on residues Ser-1177 and Ser-1178.

It belongs to the SCC3 family. In terms of assembly, interacts directly with RAD21 in cohesin complex. Cohesin complexes are composed of a heterodimer between a SMC1 protein (SMC1A or SMC1B) and SMC3, which are attached via their hinge domain, and RAD21 which link them at their heads, and one STAG protein (STAG1, STAG2 or STAG3). In cohesin complexes, STAG2 is mutually exclusive with STAG1 and STAG3. In terms of processing, phosphorylated by PLK1. The large dissociation of cohesin from chromosome arms during prophase is partly due to its phosphorylation.

Its subcellular location is the nucleus. It is found in the chromosome. The protein resides in the centromere. Functionally, component of cohesin complex, a complex required for the cohesion of sister chromatids after DNA replication. The cohesin complex apparently forms a large proteinaceous ring within which sister chromatids can be trapped. At anaphase, the complex is cleaved and dissociates from chromatin, allowing sister chromatids to segregate. The cohesin complex may also play a role in spindle pole assembly during mitosis. The protein is Cohesin subunit SA-2 (STAG2) of Homo sapiens (Human).